We begin with the raw amino-acid sequence, 362 residues long: MSKAYKRPLRSGYTTGACAAAVAKGATILLLSGEAPEKVEIPFPDGSRHSFCLSQQDGTGACMGTIKDAGDDPDVTNGALILATASWEGEDGPTCVHLTEIRLCGGDGVGQVSKRGLSIAPGEPAINPVPRQMIEAAVAEALSQHEKRKLTITISVPQGLELAEKTLNHRLGIVNGISILGTTGIVRPISASAWKATISACMDVARSAGLEQMVISTGRTSEKGAQQLLDLPEEAYAMMGDYLQFSLEEAGRKGFSTIHYAGMWAKIIKAALEVPQTHVRNGALEVEAAAQLLKKLGADEELCKKLFAANTAREMLSHLEDEGRDDLVKAVCQYAKKYAEKISEKTVHIYLINHRAEVIHYE.

Belongs to the CbiD family.

The catalysed reaction is Co-precorrin-5B + S-adenosyl-L-methionine = Co-precorrin-6A + S-adenosyl-L-homocysteine. It participates in cofactor biosynthesis; adenosylcobalamin biosynthesis; cob(II)yrinate a,c-diamide from sirohydrochlorin (anaerobic route): step 6/10. In terms of biological role, catalyzes the methylation of C-1 in cobalt-precorrin-5B to form cobalt-precorrin-6A. In Desulfotalea psychrophila (strain LSv54 / DSM 12343), this protein is Cobalt-precorrin-5B C(1)-methyltransferase.